The primary structure comprises 294 residues: Homeobox protein HD1 (294 aa).

Residues 197-217 form the ELK domain; sequence ELKLELKQGFKSRIEDVREEI. Residues 218 to 281 constitute a DNA-binding region (homeobox; TALE-type); the sequence is MRKRRAGKLP…NQRKRNWHNN (64 aa).

Belongs to the TALE/KNOX homeobox family. In terms of tissue distribution, in roots, stems and cotyledons of one-week old seedlings. In mature plants, in young leaves from first level below flowers as well as in flower buds and open flowers.

It is found in the nucleus. Possible developmental regulator. The sequence is that of Homeobox protein HD1 (HD1) from Brassica napus (Rape).